Reading from the N-terminus, the 182-residue chain is Ribosome-recycling factor (182 aa).

The interval 136–156 is disordered; it reads IRKQEKNSDISKDESRDLQDK.

It belongs to the RRF family.

It localises to the cytoplasm. In terms of biological role, responsible for the release of ribosomes from messenger RNA at the termination of protein biosynthesis. May increase the efficiency of translation by recycling ribosomes from one round of translation to another. This is Ribosome-recycling factor from Trichodesmium erythraeum (strain IMS101).